The following is a 432-amino-acid chain: D-amino acid dehydrogenase (432 aa).

3-17 (VVILGSGVVGVASAW) contributes to the FAD binding site.

Belongs to the DadA oxidoreductase family. The cofactor is FAD.

It carries out the reaction a D-alpha-amino acid + A + H2O = a 2-oxocarboxylate + AH2 + NH4(+). It participates in amino-acid degradation; D-alanine degradation; NH(3) and pyruvate from D-alanine: step 1/1. Functionally, oxidative deamination of D-amino acids. The chain is D-amino acid dehydrogenase from Shigella boydii serotype 4 (strain Sb227).